A 469-amino-acid polypeptide reads, in one-letter code: UDP-N-acetylmuramoylalanine--D-glutamate ligase (469 aa).

121–127 is a binding site for ATP; it reads GTNGKST.

This sequence belongs to the MurCDEF family.

Its subcellular location is the cytoplasm. The catalysed reaction is UDP-N-acetyl-alpha-D-muramoyl-L-alanine + D-glutamate + ATP = UDP-N-acetyl-alpha-D-muramoyl-L-alanyl-D-glutamate + ADP + phosphate + H(+). Its pathway is cell wall biogenesis; peptidoglycan biosynthesis. Functionally, cell wall formation. Catalyzes the addition of glutamate to the nucleotide precursor UDP-N-acetylmuramoyl-L-alanine (UMA). The protein is UDP-N-acetylmuramoylalanine--D-glutamate ligase of Agrobacterium fabrum (strain C58 / ATCC 33970) (Agrobacterium tumefaciens (strain C58)).